The sequence spans 171 residues: Ly6/PLAUR domain-containing protein 6 (171 aa).

Residues 1–25 form the signal peptide; sequence MEPSPALAWLLLLSLVADCLKAAQS. The 95-residue stretch at 47–141 folds into the UPAR/Ly6 domain; that stretch reads FKCFTCEKAA…PRNETDATFA (95 aa). Disulfide bonds link cysteine 49-cysteine 77, cysteine 52-cysteine 61, cysteine 70-cysteine 96, cysteine 102-cysteine 121, cysteine 107-cysteine 118, and cysteine 122-cysteine 127. A NxI motif motif is present at residues 88–90; it reads NSI. Asparagine 134 and asparagine 147 each carry an N-linked (GlcNAc...) asparagine glycan. The GPI-anchor amidated asparagine moiety is linked to residue asparagine 147. A propeptide spans 148–171 (removed in mature form); sequence QTNGHPHCVSVIVSCLWVWLGLTL.

Interacts with nicotinic acetylcholine receptors (nAChRs) including CHRNA3, CHRNA4, CHRNA5, CHRNA6, CHRNA7, CHRNB2 and CHRNB4. Interacts (via NxI motif) with LRP6. As to expression, detected in the frontal cortex and hippocampus (at protein level). Highly expressed in the brain and spinal cord, as well as dorsal root and trigeminal ganglia.

Its subcellular location is the secreted. The protein localises to the cytoplasm. It localises to the cell membrane. It is found in the synapse. The protein resides in the synaptosome. Its subcellular location is the membrane raft. The protein localises to the cell projection. It localises to the dendrite. It is found in the perikaryon. Its function is as follows. Acts as a modulator of nicotinic acetylcholine receptors (nAChRs) function in the brain. Inhibits nicotine-induced Ca(2+) influx through nAChRs. In vitro, specifically inhibits alpha-3:beta-4 and alpha-7 nAChR currents in an allosteric manner. Acts as a positive regulator of Wnt/beta-catenin signaling. This Mus musculus (Mouse) protein is Ly6/PLAUR domain-containing protein 6 (Lypd6).